A 340-amino-acid chain; its full sequence is Guanine nucleotide-binding protein G(I)/G(S)/G(T) subunit beta-1 (340 aa).

Ser-2 bears the N-acetylserine mark. Ser-2 is modified (phosphoserine). WD repeat units follow at residues 46 to 94 (RTRR…HAIP), 95 to 140 (LRSS…RELA), 141 to 181 (GHTG…TTFT), 182 to 223 (GHTG…QTFT), 224 to 267 (GHES…YSHD), 268 to 309 (NIIC…GVLA), and 310 to 340 (GHDD…KIWN). Residue His-266 is modified to Phosphohistidine.

Belongs to the WD repeat G protein beta family. G proteins are composed of 3 units, alpha, beta and gamma. The heterodimer formed by GNB1 and GNG2 interacts with ARHGEF5. The heterodimer formed by GNB1 and GNG2 interacts with GRK2. Forms a complex with GNAO1 and GNG3. Interacts with ARHGEF18 and RASD2. Forms complexes with TAS2R14 and G-proteins; these complexes play a role in the perception of bitterness. Component of the TAS2R14-GNAI1 complex, consisting of TAS2R14, GNAI1, GNB1 and GNG2. Component of the TAS2R14-GNAT3 complex, consisting of TAS2R14, GNAT3, GNB1 and GNG2. Component of the TAS2R14-GNAS2 complex, consisting of TAS2R14, GNAS2, GNB1 and GNG2. Phosphorylation at His-266 by NDKB contributes to G protein activation by increasing the high energetic phosphate transfer onto GDP.

In terms of biological role, guanine nucleotide-binding proteins (G proteins) are involved as a modulator or transducer in various transmembrane signaling systems. The beta and gamma chains are required for the GTPase activity, for replacement of GDP by GTP, and for G protein-effector interaction. This chain is Guanine nucleotide-binding protein G(I)/G(S)/G(T) subunit beta-1 (GNB1), found in Pongo abelii (Sumatran orangutan).